Reading from the N-terminus, the 354-residue chain is Protein sex-lethal (354 aa).

Positions 1-21 (MYGNNNPGSNNNNGGYPPYGY) are disordered. RRM domains follow at residues 125 to 203 (TNLI…YARP) and 211 to 291 (TNLY…LAEE).

In terms of assembly, part of a complex containing fl(2)d, Sxl and vir. Part of a complex composed of at least mei-P26, bam, bgcn and Sxl; this complex is involved in translational repression of nanos mRNA. interacts with mei-p26. Interacts with nito. Interacts with Unr; cooperates with Unr to prevent translation of msl-2 transcripts. Interacts with how; promoting nuclear retention of msl-2 transcripts. In terms of tissue distribution, expressed in somatic tissues, but not in the pole cells, which are the precursors of the germline. Expressed in the anterior of the germarium.

Its subcellular location is the nucleus. It is found in the cytoplasm. Its function is as follows. Sex determination switch protein, which controls sexual development and dosage compensation in females. Sxl protein is only active in females: it is inactive in males throughout development. Acts as a mRNA-binding protein, which specifically binds to a subset of pre-mRNAs and mRNAs and regulates their processing and/or translation. Binds nanos mRNA and is involved in bam-bgcn mediated repression of nanos mRNA translation. Promotes sexual development by controlling the female-specific alternative splicing of the transformer (tra) pre-mRNA: binds tightly to a characteristic uridine-rich polypyrimidine tract at the non-sex specific 3' splice site in one of the tra introns, preventing the general splicing factor U2AF from binding to this site and forcing it to bind to the female-specific 3' splice site. Acts as an inhibitor of dosage compensation in females by preventing production of msl-2 protein, an essential component of the MSL complex, the complex that mediates X-chromosome dosage compensation. Specifically binds to uridine stretches in both the 5'- and 3'-UTR of msl-2 transcripts. Sxl first acts at the splicing level by promoting retention of an intron in the 5' UTR of msl-2 pre-mRNA. The retained intron contains Sxl-binding sites that are required for subsequent steps of repression: after msl-2 mRNA export into the cytoplasm, Sxl coordinates its translational repression by targeting early steps of translation initiation. Together with how, Sxl also prevents production of msl-2 protein by preventing nuclear export of msl-2 transcripts. Functionally, embryo-specific product, which is expressed early only in female embryos and specifies female-adult specific splicing. The sequence is that of Protein sex-lethal from Drosophila melanogaster (Fruit fly).